Here is a 203-residue protein sequence, read N- to C-terminus: Small ribosomal subunit protein uS4 (203 aa).

The region spanning 93 to 156 (RRLDNVVYRL…MKVPAILEAV (64 aa)) is the S4 RNA-binding domain.

This sequence belongs to the universal ribosomal protein uS4 family. In terms of assembly, part of the 30S ribosomal subunit. Contacts protein S5. The interaction surface between S4 and S5 is involved in control of translational fidelity.

Functionally, one of the primary rRNA binding proteins, it binds directly to 16S rRNA where it nucleates assembly of the body of the 30S subunit. In terms of biological role, with S5 and S12 plays an important role in translational accuracy. The chain is Small ribosomal subunit protein uS4 from Streptococcus pyogenes serotype M1.